A 514-amino-acid chain; its full sequence is MTLQEEIKKRRTFAIISHPDAGKTTITEQLLYFGGEIREAGTVKGKKTGNFAKSDWMDIEKQRGISVTSSVMQFDYDGKRVNILDTPGHEDFSEDTYRTLMAVDAAVMVIDSAKGIEAQTKKLFEVVKHRNIPVFTFMNKLDRDGREPLDLLEELEEILGIASYPMNWPIGMGKSFEGLYDLYNERLELYKGEERFATLAEGDQLFASNPFYEQVKEDIELLSEAGNEFSEEAILEGKLTPVFFGSALTNFGVQTFLETFLKFAPEPHGHKKTDGEVVEPLSPDFSGFVFKIQANMDPRHRDRIAFVRIVSGEFERGMSVNLPRTSKSAKLSNVTQFMAESRENVTNAVAGDIIGVYDTGTYQVGDTLTVGKNKFEFEPLPTFTPEIFMKVSAKNVMKQKSFHKGIEQLVQEGAIQLYTNYQTGEYMLGAVGQLQFEVFKHRMENEYNAEVVMNPMGKKTVRWISPDDLDERMSSSRNILAKDRFDQPVFLFENDFALRWFADKYPDVKLEEKM.

The 261-residue stretch at 8–268 (KKRRTFAIIS…TFLKFAPEPH (261 aa)) folds into the tr-type G domain. Residues 17–24 (SHPDAGKT), 85–89 (DTPGH), and 139–142 (NKLD) contribute to the GTP site.

This sequence belongs to the TRAFAC class translation factor GTPase superfamily. Classic translation factor GTPase family. PrfC subfamily.

The protein resides in the cytoplasm. Functionally, increases the formation of ribosomal termination complexes and stimulates activities of RF-1 and RF-2. It binds guanine nucleotides and has strong preference for UGA stop codons. It may interact directly with the ribosome. The stimulation of RF-1 and RF-2 is significantly reduced by GTP and GDP, but not by GMP. The polypeptide is Peptide chain release factor 3 (Streptococcus sanguinis (strain SK36)).